Consider the following 270-residue polypeptide: 4-hydroxy-tetrahydrodipicolinate reductase (270 aa).

NAD(+)-binding positions include 8–13 (GAAGRM) and Glu34. Arg35 contributes to the NADP(+) binding site. NAD(+) is bound by residues 98–100 (GST) and 122–125 (SPNM). The Proton donor/acceptor role is filled by His155. Residue His156 participates in (S)-2,3,4,5-tetrahydrodipicolinate binding. Catalysis depends on Lys159, which acts as the Proton donor. Residue 165-166 (GT) coordinates (S)-2,3,4,5-tetrahydrodipicolinate.

Belongs to the DapB family.

It is found in the cytoplasm. It carries out the reaction (S)-2,3,4,5-tetrahydrodipicolinate + NAD(+) + H2O = (2S,4S)-4-hydroxy-2,3,4,5-tetrahydrodipicolinate + NADH + H(+). It catalyses the reaction (S)-2,3,4,5-tetrahydrodipicolinate + NADP(+) + H2O = (2S,4S)-4-hydroxy-2,3,4,5-tetrahydrodipicolinate + NADPH + H(+). The protein operates within amino-acid biosynthesis; L-lysine biosynthesis via DAP pathway; (S)-tetrahydrodipicolinate from L-aspartate: step 4/4. Functionally, catalyzes the conversion of 4-hydroxy-tetrahydrodipicolinate (HTPA) to tetrahydrodipicolinate. This Anaeromyxobacter dehalogenans (strain 2CP-1 / ATCC BAA-258) protein is 4-hydroxy-tetrahydrodipicolinate reductase.